The sequence spans 454 residues: MSTTDTIVAQATPPGRGGVGILRVSGRAASEVAHAVLGKLPKPRYADYLPFKDVDGSTLDQGIALYFPGPNSFTGEDVLELQGHGGPVILDLLLKRILALPGLRIARPGEFSERAFLNDKLDLAQAEAIADLIDASSEQAARSAVNSLQGAFSARIHQLVEALTHLRIYVEAAIDFPDEEIDFLSDGKIEGQLNGVMADLEQVRTEARQGSLLREGMKVVIAGRPNAGKSSLLNALAGREAAIVTDIAGTTRDVLREHIHINGMPLHIIDTAGLREANDEVERIGIERAWNEIEQADRVLFMVDGTTTDATEPAAIWPEFMARLPATLPITVVRNKADITGETLGLTEVNGHSLIRLSARTGEGIDLLRDHLKQSMGFTSNTEGGFLARRRHLQALETAARHLIQGHEQLVSAYAGELLAEELRLAQQSLSEITGEFSSDDLLGRIFSSFCIGK.

3 residues coordinate (6S)-5-formyl-5,6,7,8-tetrahydrofolate: Arg23, Glu80, and Lys120. Residues 216-377 (GMKVVIAGRP…LRDHLKQSMG (162 aa)) enclose the TrmE-type G domain. Residue Asn226 participates in K(+) binding. Residues 226 to 231 (NAGKSS), 245 to 251 (TDIAGTT), 270 to 273 (DTAG), 335 to 338 (NKAD), and 358 to 360 (SAR) contribute to the GTP site. Ser230 is a Mg(2+) binding site. K(+)-binding residues include Thr245, Ile247, and Thr250. Thr251 contributes to the Mg(2+) binding site. Lys454 lines the (6S)-5-formyl-5,6,7,8-tetrahydrofolate pocket.

The protein belongs to the TRAFAC class TrmE-Era-EngA-EngB-Septin-like GTPase superfamily. TrmE GTPase family. In terms of assembly, homodimer. Heterotetramer of two MnmE and two MnmG subunits. Requires K(+) as cofactor.

It localises to the cytoplasm. Its function is as follows. Exhibits a very high intrinsic GTPase hydrolysis rate. Involved in the addition of a carboxymethylaminomethyl (cmnm) group at the wobble position (U34) of certain tRNAs, forming tRNA-cmnm(5)s(2)U34. This Yersinia pseudotuberculosis serotype O:1b (strain IP 31758) protein is tRNA modification GTPase MnmE.